A 382-amino-acid chain; its full sequence is Beta-1,4-galactosyltransferase 6 (382 aa).

Topologically, residues 1-15 (MSALKRMMRVSNRSL) are cytoplasmic. Residues 16-35 (IAFIFFFSLSTSCLYFIYVA) traverse the membrane as a helical; Signal-anchor for type II membrane protein segment. Residues 36 to 382 (PGIANTYLFM…MPELAPIEDY (347 aa)) lie on the Lumenal side of the membrane. Residues Asn71, Asn75, Asn83, Asn84, Asn99, and Asn122 are each glycosylated (N-linked (GlcNAc...) asparagine). An intrachain disulfide couples Cys108 to Cys152. Residues 163 to 167 (PFRNR), 202 to 204 (FNR), 229 to 230 (VD), Tyr258, and Trp290 contribute to the UDP-alpha-D-galactose site. The cysteines at positions 223 and 242 are disulfide-linked. A Mn(2+)-binding site is contributed by Asp230. 292 to 295 (GEDD) contacts N-acetyl-D-glucosamine. N-linked (GlcNAc...) asparagine glycosylation occurs at Asn307. His323 is a binding site for Mn(2+). A UDP-alpha-D-galactose-binding site is contributed by 323 to 324 (HH). Arg334 contacts N-acetyl-D-glucosamine. N-linked (GlcNAc...) asparagine glycosylation is present at Asn367.

It belongs to the glycosyltransferase 7 family. It depends on Mn(2+) as a cofactor. The cofactor is Mg(2+). Requires Ca(2+) as cofactor. In terms of tissue distribution, brain and kidney.

The protein localises to the golgi apparatus. It is found in the golgi stack membrane. It catalyses the reaction a beta-D-glucosyl-(1&lt;-&gt;1')-N-acylsphing-4-enine + UDP-alpha-D-galactose = a beta-D-Gal-(1-&gt;4)-beta-D-Glc-(1&lt;-&gt;1)-Cer(d18:1(4E)) + UDP + H(+). It participates in protein modification; protein glycosylation. It functions in the pathway sphingolipid metabolism. Its activity is regulated as follows. Inhibited by EDTA. In terms of biological role, catalyzes the synthesis of lactosylceramide (LacCer) via the transfer of galactose from UDP-galactose to glucosylceramide (GlcCer). LacCer is the starting point in the biosynthesis of all gangliosides (membrane-bound glycosphingolipids) which play pivotal roles in the CNS including neuronal maturation and axonal and myelin formation. This is Beta-1,4-galactosyltransferase 6 from Mus musculus (Mouse).